A 127-amino-acid chain; its full sequence is Small ribosomal subunit protein bS6 (127 aa).

The span at 106-117 shows a compositional bias: basic and acidic residues; that stretch reads ERKAQSEKKEAE. A disordered region spans residues 106 to 127; sequence ERKAQSEKKEAEVSEGEGGTEA. Over residues 118–127 the composition is skewed to acidic residues; the sequence is VSEGEGGTEA.

It belongs to the bacterial ribosomal protein bS6 family.

In terms of biological role, binds together with bS18 to 16S ribosomal RNA. This chain is Small ribosomal subunit protein bS6, found in Thermotoga neapolitana (strain ATCC 49049 / DSM 4359 / NBRC 107923 / NS-E).